Here is a 284-residue protein sequence, read N- to C-terminus: uncharacterized protein (284 aa).

The chain crosses the membrane as a helical span at residues 9-28 (IILRWVVTLYIYGFILYQIT).

The protein resides in the membrane. This is an uncharacterized protein from Aquifex aeolicus (strain VF5).